We begin with the raw amino-acid sequence, 535 residues long: 3-hydroxyindolin-2-one monooxygenase (535 aa).

Transmembrane regions (helical) follow at residues 14-34 (VVQCTPTQAAAVLGVLLLLAI) and 469-489 (ICAGATFAIATVEIMLANLIY). Cys470 lines the heme pocket.

The protein belongs to the cytochrome P450 family. Heme serves as cofactor.

Its subcellular location is the membrane. The enzyme catalyses 3-hydroxyindolin-2-one + reduced [NADPH--hemoprotein reductase] + O2 = 2-hydroxy-2H-1,4-benzoxazin-3(4H)-one + oxidized [NADPH--hemoprotein reductase] + H2O + H(+). Its pathway is secondary metabolite biosynthesis; 2,4-dihydroxy-1,4-benzoxazin-3-one biosynthesis; 2,4-dihydroxy-1,4-benzoxazin-3-one from indoleglycerol phosphate: step 4/5. Catalyzes the conversion of 3-hydroxyindolin-2-one to 2-hydroxy-1,4-benzoxazin-3-one (HBOA). The sequence is that of 3-hydroxyindolin-2-one monooxygenase (CYP71C1) from Zea mays (Maize).